The sequence spans 614 residues: DNA mismatch repair protein MutL (614 aa).

Belongs to the DNA mismatch repair MutL/HexB family.

Functionally, this protein is involved in the repair of mismatches in DNA. It is required for dam-dependent methyl-directed DNA mismatch repair. May act as a 'molecular matchmaker', a protein that promotes the formation of a stable complex between two or more DNA-binding proteins in an ATP-dependent manner without itself being part of a final effector complex. In Thermoanaerobacter sp. (strain X514), this protein is DNA mismatch repair protein MutL.